Consider the following 345-residue polypeptide: Anthranilate phosphoribosyltransferase (345 aa).

Residues G83, 86–87, T91, 93–96, 111–119, and S123 each bind 5-phospho-alpha-D-ribose 1-diphosphate; these read GD, NIST, and KHGNRNLSS. G83 is a binding site for anthranilate. S95 serves as a coordination point for Mg(2+). An anthranilate-binding site is contributed by N114. R169 lines the anthranilate pocket. Residues D228 and E229 each contribute to the Mg(2+) site.

It belongs to the anthranilate phosphoribosyltransferase family. As to quaternary structure, homodimer. Requires Mg(2+) as cofactor.

The catalysed reaction is N-(5-phospho-beta-D-ribosyl)anthranilate + diphosphate = 5-phospho-alpha-D-ribose 1-diphosphate + anthranilate. It participates in amino-acid biosynthesis; L-tryptophan biosynthesis; L-tryptophan from chorismate: step 2/5. In terms of biological role, catalyzes the transfer of the phosphoribosyl group of 5-phosphorylribose-1-pyrophosphate (PRPP) to anthranilate to yield N-(5'-phosphoribosyl)-anthranilate (PRA). The sequence is that of Anthranilate phosphoribosyltransferase from Paracoccus denitrificans (strain Pd 1222).